The following is a 79-amino-acid chain: Serine protease inhibitor Kazal-type 1 (79 aa).

Positions 1–23 are cleaved as a signal peptide; sequence MKVTGIFLLSALALLSLSGNTGA. The Kazal-like domain maps to 26–79; it reads LGREAKCYNELNGCTKIYDPVCGTDGNTYPNECVLCFENRKRQTSILIQKSGPC. Intrachain disulfides connect Cys-32/Cys-61, Cys-39/Cys-58, and Cys-47/Cys-79.

The protein resides in the secreted. Its function is as follows. Serine protease inhibitor which exhibits anti-trypsin activity. In the pancreas, protects against trypsin-catalyzed premature activation of zymogens. In the male reproductive tract, binds to sperm heads where it modulates sperm capacitance by inhibiting calcium uptake and nitrogen oxide (NO) production. In Homo sapiens (Human), this protein is Serine protease inhibitor Kazal-type 1 (SPINK1).